A 497-amino-acid polypeptide reads, in one-letter code: Probable pyruvate kinase, cytosolic isozyme (497 aa).

Arg-37 is a binding site for substrate. K(+)-binding residues include Asn-39, Ser-41, Asp-71, and Thr-72. 39–42 (NFSH) contacts ATP. Positions 78 and 163 each coordinate ATP. Position 227 (Lys-227) interacts with substrate. Glu-229 lines the Mg(2+) pocket. Residues Gly-252, Asp-253, and Thr-285 each contribute to the substrate site. Residue Asp-253 coordinates Mg(2+).

This sequence belongs to the pyruvate kinase family. Homotetramer. It depends on Mg(2+) as a cofactor. Requires K(+) as cofactor.

The protein resides in the cytoplasm. It localises to the cytosol. The enzyme catalyses pyruvate + ATP = phosphoenolpyruvate + ADP + H(+). It participates in carbohydrate degradation; glycolysis; pyruvate from D-glyceraldehyde 3-phosphate: step 5/5. Key regulatory enzyme of the glycolytic pathway that catalyzes the final step of glycolysis, converting ADP and phosphoenolpyruvate (PEP) to ATP and pyruvate by essentially irreversible transphosphorylation. The polypeptide is Probable pyruvate kinase, cytosolic isozyme (Arabidopsis thaliana (Mouse-ear cress)).